The sequence spans 118 residues: MSIKYSNKINKIRTFALSLVFIGLFIAYLGVFFRENIIIMTTFMMVGFLAVIASTVVYFWIGMLSTKTIQIICPSCDKPTKMLGRVDACMHCNQPLTLDRDLEGKEFDEKYNKKSYKS.

2 consecutive transmembrane segments (helical) span residues 12-32 and 43-63; these read IRTF…LGVF and FMMV…WIGM.

Belongs to the UPF0295 family.

The protein localises to the cell membrane. The chain is UPF0295 protein BC_0520 from Bacillus cereus (strain ATCC 14579 / DSM 31 / CCUG 7414 / JCM 2152 / NBRC 15305 / NCIMB 9373 / NCTC 2599 / NRRL B-3711).